The sequence spans 1055 residues: MDS1 and EVI1 complex locus protein EVI1-A (1055 aa).

3 consecutive C2H2-type zinc fingers follow at residues 21 to 48 (YRCE…VTPH), 75 to 97 (HECK…LLSH), and 103 to 125 (YKCD…QMSH). A C2H2-type 4; degenerate zinc finger spans residues 131 to 155 (YECENCSKQVFTDPSNLQRHIRSQH). C2H2-type zinc fingers lie at residues 161–183 (HACS…KHIH) and 189–211 (FVCE…KRMH). The C2H2-type 7; atypical zinc finger occupies 218-240 (IKCKDCGQMFSTTSSLNKHRRFC). Disordered regions lie at residues 324-345 (PVKG…VNQP), 372-423 (FITE…SDKD), and 531-621 (VPLK…PELP). The span at 332-345 (EQSSKSQSPHVNQP) shows a compositional bias: polar residues. Over residues 381-392 (RPHEKISDHSES) the composition is skewed to basic and acidic residues. Polar residues predominate over residues 399-413 (STPSGSDLETTSGSD). The Nuclear localization signal signature appears at 422–435 (KDKLKENGKLYKDK). Positions 531 to 566 (VPLKIEPESPKETKKVQKGKTESPFDLTTKRKEEKA) are enriched in basic and acidic residues. The short motif at 554-558 (PFDLT) is the CTBP-binding motif 1 element. Polar residues predominate over residues 569–583 (NVPSKSGAPTSSNHD). The CTBP-binding motif 2 signature appears at 585 to 589 (PLDLS). Residues 591–601 (GSRSRAATTKQ) show a composition bias toward polar residues. A compositionally biased stretch (basic and acidic residues) spans 602-621 (TEPRKNHIFNEKKDMDPELP). 3 C2H2-type zinc fingers span residues 734–756 (YTCR…LRTH), 762–785 (YRCK…RNIH), and 791–813 (FKCH…LKKH). Disordered regions lie at residues 813–837 (HENG…GPIL) and 922–957 (SVDE…EDFK). Over residues 816–827 (GNLSGTAASSPH) the composition is skewed to polar residues. The segment covering 944-954 (DDEDDDDDEEE) has biased composition (acidic residues).

In terms of assembly, homooligomer. Interacts with ctbp. In terms of tissue distribution, expressed dynamically during embryonic development; in the developing pronephros, specific areas of the brain (forebrain, midbrain and hindbrain), and in the majority of the visceral arch, and head mesenchyme derived from neural crest cells. Within the pronephros, expressed in the ventroposterior region of the pronephros anlagen from stage 20 (and is absent from the splanchnic layer that forms the glomus), then expression becomes restricted to the distal tubule and duct by the tadpole stage. In adults, expressed in various tissues including kidney, lung, testis, spleen and stomach.

It localises to the nucleus. The protein localises to the nucleus speckle. Functionally, transcriptional repressor during pronephros development. Plays a role in regionalization of the pronephros; may promote formation of the distal tubule and duct over formation of the glomus and proximal tubule. This Xenopus laevis (African clawed frog) protein is MDS1 and EVI1 complex locus protein EVI1-A (mecom-a).